A 355-amino-acid chain; its full sequence is MATPEEKAKALEAALGQIEKQFGKGAIMKLGETQKLDIEAISTGSLSLDVALGIGGLPMGRIVEIFGPESSGKTTLTLSVIAQAQKAGKTCAFIDAEHALDPIYAAKLGVDVKELLISQPDNGEQALEICDALVRSGAVDVVIVDSVAALTPKAEIEGEMGDTHVGLQARLMSQALRKLTGQIKNSNCLVVFINQIRMKIGVIFGNPETTTGGNALKFYASVRLDIRRVGSIKNGDEVIGNETRVKVVKNKVAPPFRQVDFQILYGEGISRNGELIELGVKHKLVNKSGAWFSYEGEKIGQGKTNAMKWLAEHPEQAAILEQKLRSELLANPEKALLADLEAESESNISEVESDF.

ATP is bound at residue glycine 67–threonine 74.

The protein belongs to the RecA family.

The protein resides in the cytoplasm. In terms of biological role, can catalyze the hydrolysis of ATP in the presence of single-stranded DNA, the ATP-dependent uptake of single-stranded DNA by duplex DNA, and the ATP-dependent hybridization of homologous single-stranded DNAs. It interacts with LexA causing its activation and leading to its autocatalytic cleavage. This is Protein RecA from Histophilus somni (strain 129Pt) (Haemophilus somnus).